We begin with the raw amino-acid sequence, 169 residues long: Lipoprotein signal peptidase (169 aa).

Over 1 to 9 (MPDVDRFGR) the chain is Cytoplasmic. A helical transmembrane segment spans residues 10-30 (LPWLWITVLVFVLDQVSKAFF). Over 31–67 (QAELSMYQQIVVIPDLFSWTLAYNTGAAFSFLADSSG) the chain is Periplasmic. The helical transmembrane segment at 68–89 (WQRWLFALIAIVVSASLVVWLK) threads the bilayer. Residues 90–96 (RLKKGET) are Cytoplasmic-facing. Residues 97 to 118 (WLAIALALVLGGALGNLYDRMV) form a helical membrane-spanning segment. Residues 119 to 140 (LGHVVDFILVHWQNRWYFPAFN) are Periplasmic-facing. Active-site residues include aspartate 124 and aspartate 143. Residues 141–154 (LADSAITVGAVMLA) traverse the membrane as a helical segment. Residues 155–169 (LDMFRSKKSGEAAHG) lie on the Cytoplasmic side of the membrane.

This sequence belongs to the peptidase A8 family. As to quaternary structure, monomer in the crystal.

The protein resides in the cell inner membrane. The enzyme catalyses Release of signal peptides from bacterial membrane prolipoproteins. Hydrolyzes -Xaa-Yaa-Zaa-|-(S,diacylglyceryl)Cys-, in which Xaa is hydrophobic (preferably Leu), and Yaa (Ala or Ser) and Zaa (Gly or Ala) have small, neutral side chains.. It participates in protein modification; lipoprotein biosynthesis (signal peptide cleavage). Its activity is regulated as follows. Inhibited by globomycin. Functionally, this protein specifically catalyzes the removal of signal peptides from prolipoproteins. The polypeptide is Lipoprotein signal peptidase (Pseudomonas aeruginosa (strain ATCC 15692 / DSM 22644 / CIP 104116 / JCM 14847 / LMG 12228 / 1C / PRS 101 / PAO1)).